A 311-amino-acid polypeptide reads, in one-letter code: Long form salivary protein D7L1 (311 aa).

An N-terminal signal peptide occupies residues 1–16 (MKALIFLGAIIAGVLS). Cystine bridges form between cysteine 34–cysteine 67 and cysteine 63–cysteine 120. ADP is bound by residues serine 146, arginine 149, tyrosine 153, and lysine 160. Disulfide bonds link cysteine 170/cysteine 202, cysteine 183/cysteine 311, and cysteine 244/cysteine 258. Residues asparagine 281, tyrosine 282, and serine 283 each contribute to the ADP site.

This sequence belongs to the PBP/GOBP family. In terms of tissue distribution, distal lateral and medial lobes of female mosquito salivary gland (at protein level). Expressed in the head and thorax of the female mosquitoes, where the salivary glands are located. Expressed in salivary gland. Not detected in the female mosquito abdomen. Not detected in the male mosquito tissues.

It localises to the secreted. In terms of biological role, modulates blood feeding of female mosquitoes on vertebrate species by binding and sequestering different mediators involved in the host response. Binds adenine, adenosine, AMP, ADP and ATP, with the highest affinity to ATP and ADP. Inhibits agonist-induced platelet aggregation and hemostasis. The sequence is that of Long form salivary protein D7L1 from Culex quinquefasciatus (Southern house mosquito).